Here is a 412-residue protein sequence, read N- to C-terminus: uncharacterized protein (412 aa).

The 215-residue stretch at 50 to 264 (EVDIRTAYIN…KSGRRIVIGD (215 aa)) folds into the Radical SAM core domain. Cys64, Cys68, and Cys71 together coordinate [4Fe-4S] cluster.

Belongs to the radical SAM superfamily. Anaerobic sulfatase-maturating enzyme family. [4Fe-4S] cluster is required as a cofactor.

This is an uncharacterized protein from Archaeoglobus fulgidus (strain ATCC 49558 / DSM 4304 / JCM 9628 / NBRC 100126 / VC-16).